The following is a 221-amino-acid chain: Superoxide dismutase [Mn] 1, mitochondrial (221 aa).

A mitochondrion-targeting transit peptide spans Met1–Ser24. Residues His50, His98, Asp182, and His186 each contribute to the Mn(2+) site.

The protein belongs to the iron/manganese superoxide dismutase family. Homotetramer. Mn(2+) is required as a cofactor.

Its subcellular location is the mitochondrion matrix. The catalysed reaction is 2 superoxide + 2 H(+) = H2O2 + O2. Functionally, destroys superoxide anion radicals which are normally produced within the cells and which are toxic to biological systems. In Caenorhabditis elegans, this protein is Superoxide dismutase [Mn] 1, mitochondrial (sod-2).